Reading from the N-terminus, the 1889-residue chain is Protein TIC 214 (1889 aa).

6 helical membrane passes run 11 to 31 (LISL…YYGF), 67 to 87 (FIAG…HLAL), 88 to 108 (GKPH…FFWN), 127 to 147 (LSIQ…HFIL), 175 to 195 (VGWL…LVWI), and 224 to 244 (IFSI…PSPI). Acidic residues predominate over residues 255 to 265 (PEEVGESEEER). 2 disordered regions span residues 255–303 (PEEV…PSKE) and 1610–1633 (SNQE…KKKQ). A compositionally biased stretch (polar residues) spans 279–293 (NQKQGTEENTSSSLF).

It belongs to the TIC214 family. Part of the Tic complex.

It is found in the plastid. The protein resides in the chloroplast inner membrane. Its function is as follows. Involved in protein precursor import into chloroplasts. May be part of an intermediate translocation complex acting as a protein-conducting channel at the inner envelope. The protein is Protein TIC 214 of Gossypium barbadense (Sea Island cotton).